The chain runs to 255 residues: MILVFDVGNTNTVIGVYDREKLLNHWRIRTNPQRTCDEYGILLRSLLENDKLNLKDIKSVVISSVVPTLMMELEWMSRKFFACRPLVIGPGVKSGLAIKYENPREVGADRVVNAVAAYDKYGGPLIIVDFGTATTFCVVSAKGEYLGGAIAPGIIISTEALVSKAAKLPRVELQRPRSLIGKNTVSSMQAGIMYGFVGQVEGIITRMKTEIETTPQVIATGGLAAVIARETDVIDKVDEFLTLDGLRLIYEMNRG.

6-13 (DVGNTNTV) is a binding site for ATP. Substrate is bound by residues Tyr-100 and 107 to 110 (GADR). Asp-109 functions as the Proton acceptor in the catalytic mechanism. Asp-129 provides a ligand contact to K(+). ATP is bound at residue Thr-132. A substrate-binding site is contributed by Thr-184.

The protein belongs to the type III pantothenate kinase family. As to quaternary structure, homodimer. Requires NH4(+) as cofactor. It depends on K(+) as a cofactor.

It is found in the cytoplasm. It carries out the reaction (R)-pantothenate + ATP = (R)-4'-phosphopantothenate + ADP + H(+). It functions in the pathway cofactor biosynthesis; coenzyme A biosynthesis; CoA from (R)-pantothenate: step 1/5. Functionally, catalyzes the phosphorylation of pantothenate (Pan), the first step in CoA biosynthesis. In Syntrophomonas wolfei subsp. wolfei (strain DSM 2245B / Goettingen), this protein is Type III pantothenate kinase.